The chain runs to 391 residues: Ferrochelatase (391 aa).

2 residues coordinate Fe cation: His-196 and Glu-281.

The protein belongs to the ferrochelatase family.

It localises to the cytoplasm. The enzyme catalyses heme b + 2 H(+) = protoporphyrin IX + Fe(2+). It participates in porphyrin-containing compound metabolism; protoheme biosynthesis; protoheme from protoporphyrin-IX: step 1/1. In terms of biological role, catalyzes the ferrous insertion into protoporphyrin IX. The chain is Ferrochelatase from Synechococcus sp. (strain CC9311).